The primary structure comprises 569 residues: Glutamate--tRNA ligase (569 aa).

The short motif at 110–120 (PNPNGPPTLGS) is the 'HIGH' region element.

The protein belongs to the class-I aminoacyl-tRNA synthetase family. Glutamate--tRNA ligase type 2 subfamily.

The protein localises to the cytoplasm. The enzyme catalyses tRNA(Glu) + L-glutamate + ATP = L-glutamyl-tRNA(Glu) + AMP + diphosphate. Its function is as follows. Catalyzes the attachment of glutamate to tRNA(Glu) in a two-step reaction: glutamate is first activated by ATP to form Glu-AMP and then transferred to the acceptor end of tRNA(Glu). The polypeptide is Glutamate--tRNA ligase (Methanococcoides burtonii (strain DSM 6242 / NBRC 107633 / OCM 468 / ACE-M)).